Consider the following 572-residue polypeptide: Ribonuclease Y (572 aa).

The chain crosses the membrane as a helical span at residues 1–21; sequence MPTLYVILSLLLGLIGGVLVQ. Disordered regions lie at residues 59-85 and 110-142; these read HEAA…DAAE and QLEA…ERED. Composition is skewed to basic and acidic residues over residues 110–119 and 129–142; these read QLEAEREQAK and LSTD…ERED. One can recognise a KH domain in the interval 262–322; the sequence is SVSVVPIPSD…LRREVARHVL (61 aa). The region spanning 388-481 is the HD domain; sequence VLKHSVQVAH…VAAADAISAA (94 aa).

This sequence belongs to the RNase Y family.

The protein resides in the cell membrane. Endoribonuclease that initiates mRNA decay. The protein is Ribonuclease Y of Deinococcus radiodurans (strain ATCC 13939 / DSM 20539 / JCM 16871 / CCUG 27074 / LMG 4051 / NBRC 15346 / NCIMB 9279 / VKM B-1422 / R1).